A 469-amino-acid chain; its full sequence is Acetyl-CoA decarbonylase/synthase complex subunit beta 1 (469 aa).

[Ni-Fe-S] cluster contacts are provided by Cys-189, Cys-192, Cys-278, and Cys-280.

This sequence belongs to the CdhC family. Monomer. The ACDS complex is made up of alpha, epsilon, beta, gamma and delta chains with a probable stoichiometry of (alpha(2)epsilon(2))(4)-beta(8)-(gamma(1)delta(1))(8) (Potential). [Ni-Fe-S] cluster is required as a cofactor.

The catalysed reaction is Co(I)-[corrinoid Fe-S protein] + acetyl-CoA + H(+) = methyl-Co(III)-[corrinoid Fe-S protein] + CO + CoA. The protein operates within one-carbon metabolism; methanogenesis from acetate. Functionally, part of a complex that catalyzes the reversible cleavage of acetyl-CoA, allowing growth on acetate as sole source of carbon and energy. The alpha-epsilon complex generates CO from CO(2), while the beta subunit (this protein) combines the CO with CoA and a methyl group to form acetyl-CoA. The methyl group, which is incorporated into acetyl-CoA, is transferred to the beta subunit by a corrinoid iron-sulfur protein (the gamma-delta complex). In Methanosarcina thermophila, this protein is Acetyl-CoA decarbonylase/synthase complex subunit beta 1 (cdhC1).